The following is a 247-amino-acid chain: Exosome complex component Rrp4 (247 aa).

Positions 70 to 143 (GDTVIGLIED…INPILSIKGK (74 aa)) constitute an S1 motif domain. Positions 149-211 (SSGIVIDIPP…EALVEAIQII (63 aa)) constitute a KH domain.

Belongs to the RRP4 family. In terms of assembly, component of the archaeal exosome complex. Forms a trimer of Rrp4 and/or Csl4 subunits. The trimer associates with a hexameric ring-like arrangement composed of 3 Rrp41-Rrp42 heterodimers.

The protein localises to the cytoplasm. In terms of biological role, non-catalytic component of the exosome, which is a complex involved in RNA degradation. Increases the RNA binding and the efficiency of RNA degradation. Confers strong poly(A) specificity to the exosome. The sequence is that of Exosome complex component Rrp4 from Sulfurisphaera tokodaii (strain DSM 16993 / JCM 10545 / NBRC 100140 / 7) (Sulfolobus tokodaii).